The sequence spans 207 residues: Glycerol-3-phosphate acyltransferase (207 aa).

Transmembrane regions (helical) follow at residues 3–23 (LIGL…VWVG), 54–74 (TIVM…PIVF), 81–101 (GTAT…VSIF), 122–142 (PIMF…TSIV), and 158–178 (LVFQ…FVFY).

It belongs to the PlsY family. In terms of assembly, probably interacts with PlsX.

The protein resides in the cell membrane. It catalyses the reaction an acyl phosphate + sn-glycerol 3-phosphate = a 1-acyl-sn-glycero-3-phosphate + phosphate. Its pathway is lipid metabolism; phospholipid metabolism. Catalyzes the transfer of an acyl group from acyl-phosphate (acyl-PO(4)) to glycerol-3-phosphate (G3P) to form lysophosphatidic acid (LPA). This enzyme utilizes acyl-phosphate as fatty acyl donor, but not acyl-CoA or acyl-ACP. The polypeptide is Glycerol-3-phosphate acyltransferase (Levilactobacillus brevis (strain ATCC 367 / BCRC 12310 / CIP 105137 / JCM 1170 / LMG 11437 / NCIMB 947 / NCTC 947) (Lactobacillus brevis)).